The sequence spans 367 residues: MAEFNALELVNPGVKQLRPYQAGKPTSELQRELGLQHVVKLASNENPLGLSEKVKTALEAELTDLVRYPDANGYYLKSRLAELNEVGTQQITLGNGSNDVLEILARTFVSDKDEVIFSQHAFVVYPLVTQAIGAKPVAVPAVDYGHDLDGMAKAVTDKTKMIFIANPNNPTGTFLSTSALKSFLDKIPQHIIVVLDEAYYEYVPEDQRAPSVEWIKEYPNLVVSRTFSKAYGLAGLRAGYAVSHESVADVLNRIRQPFNMNSLSLKAAEVVLDDHAYLQKAVELNAQGMQLLTEFCEESGLNYIPSYGNFLTIEVGPGAEKLYDELLHEGVIVRPVGGYELPNHLRVSIGLPEENQAFIKAMKKLRG.

At lysine 229 the chain carries N6-(pyridoxal phosphate)lysine.

It belongs to the class-II pyridoxal-phosphate-dependent aminotransferase family. Histidinol-phosphate aminotransferase subfamily. As to quaternary structure, homodimer. Pyridoxal 5'-phosphate is required as a cofactor.

The enzyme catalyses L-histidinol phosphate + 2-oxoglutarate = 3-(imidazol-4-yl)-2-oxopropyl phosphate + L-glutamate. It functions in the pathway amino-acid biosynthesis; L-histidine biosynthesis; L-histidine from 5-phospho-alpha-D-ribose 1-diphosphate: step 7/9. The polypeptide is Histidinol-phosphate aminotransferase 1 (Idiomarina loihiensis (strain ATCC BAA-735 / DSM 15497 / L2-TR)).